The following is a 197-amino-acid chain: Probable UbiX-like flavin prenyltransferase (197 aa).

FMN-binding positions include 9–11 (GAT), serine 36, 87–90 (SMKT), and arginine 122.

This sequence belongs to the UbiX/PAD1 family. YclB subfamily. As to quaternary structure, homododecamer.

The enzyme catalyses dimethylallyl phosphate + FMNH2 = prenylated FMNH2 + phosphate. Its function is as follows. Flavin prenyltransferase that catalyzes the synthesis of the prenylated FMN cofactor (prenyl-FMN) for phenolic acid decarboxylase C. Involved in the decarboxylation and detoxification of phenolic derivatives under both aerobic and anaerobic conditions. This Escherichia coli protein is Probable UbiX-like flavin prenyltransferase (ecdB).